Here is a 191-residue protein sequence, read N- to C-terminus: Inosine triphosphate pyrophosphatase (191 aa).

An ITP-binding site is contributed by 15 to 20 (TGNTNK). E43 contacts Mg(2+). Residues K55, 71–72 (DT), K88, 147–150 (FGWD), K168, and 173–174 (HR) each bind ITP.

The protein belongs to the HAM1 NTPase family. Homodimer. Mg(2+) is required as a cofactor. Mn(2+) serves as cofactor.

The protein resides in the cytoplasm. Its subcellular location is the nucleus. The enzyme catalyses ITP + H2O = IMP + diphosphate + H(+). It catalyses the reaction dITP + H2O = dIMP + diphosphate + H(+). It carries out the reaction XTP + H2O = XMP + diphosphate + H(+). Functionally, pyrophosphatase that hydrolyzes non-canonical purine nucleotides such as inosine triphosphate (ITP), deoxyinosine triphosphate (dITP) or xanthosine 5'-triphosphate (XTP) to their respective monophosphate derivatives. The enzyme does not distinguish between the deoxy- and ribose forms. Probably excludes non-canonical purines from RNA and DNA precursor pools, thus preventing their incorporation into RNA and DNA and avoiding chromosomal lesions. The polypeptide is Inosine triphosphate pyrophosphatase (Chaetomium globosum (strain ATCC 6205 / CBS 148.51 / DSM 1962 / NBRC 6347 / NRRL 1970) (Soil fungus)).